The following is a 299-amino-acid chain: Taste receptor type 2 member 19 (299 aa).

Met-1 is a topological domain (extracellular). A helical transmembrane segment spans residues 2–22; it reads MCFLLIISSILVVFAFVLGNV. Residues 23 to 55 are Cytoplasmic-facing; it reads ANGFIALVNVIDWVNTRKISSAEQILTALVVSR. The helical transmembrane segment at 56-76 threads the bilayer; that stretch reads IGLLWVMLFLWYATVFNSALY. Over 77–87 the chain is Extracellular; that stretch reads GLEVRIVASNA. The helical transmembrane segment at 88–108 threads the bilayer; it reads WAVTNHFSMWLAASLSIFCLL. Residues 109–127 are Cytoplasmic-facing; sequence KIANFSNLISLHLKKRIKS. A helical transmembrane segment spans residues 128-148; it reads VVLVILLGPLVFLICNLAVIT. At 149-181 the chain is on the extracellular side; it reads MDERVWTKEYEGNVTWKIKLRNAIHLSSLTVTT. N-linked (GlcNAc...) asparagine glycosylation is present at Asn-161. A helical transmembrane segment spans residues 182 to 202; sequence LANLIPFTLSLICFLLLICSL. Topologically, residues 203-226 are cytoplasmic; that stretch reads CKHLKKMRLHSKGSQDPSTKVHIK. The chain crosses the membrane as a helical span at residues 227–247; sequence ALQTVTSFLMLFAIYFLCIIT. The Extracellular portion of the chain corresponds to 248 to 259; sequence STWNLRTQQSKL. Residues 260-280 form a helical membrane-spanning segment; the sequence is VLLLCQTVAIMYPSFHSFILI. The Cytoplasmic portion of the chain corresponds to 281–299; that stretch reads MGSRKLKQTFLSVLWQMTR.

It belongs to the G-protein coupled receptor T2R family. Expressed in subsets of taste receptor cells of the tongue and exclusively in gustducin-positive cells.

Its subcellular location is the membrane. Receptor that may play a role in the perception of bitterness and is gustducin-linked. May play a role in sensing the chemical composition of the gastrointestinal content. The activity of this receptor may stimulate alpha gustducin, mediate PLC-beta-2 activation and lead to the gating of TRPM5. This Homo sapiens (Human) protein is Taste receptor type 2 member 19 (TAS2R19).